Consider the following 131-residue polypeptide: U-scoloptoxin-Er5e (131 aa).

The N-terminal stretch at 1–22 is a signal peptide; the sequence is MKTNCEFPLLCLLIVLVANVEG. A propeptide spanning residues 23–94 is cleaved from the precursor; it reads EVEDNELKMV…KRLWRNWERR (72 aa). RLWRNWE repeat units lie at residues 34 to 40, 61 to 67, and 86 to 92; these read RLWRNWE. The residue at position 95 (glutamine 95) is a Pyrrolidone carboxylic acid. The stretch at 107–113 is one RLWRNWE 4; approximate repeat; it reads ELWRNWE. The propeptide occupies 112–131; it reads WEDLKRRQVVDLNDEQKTTG.

The protein belongs to the scoloptoxin-08 family. Expressed by the venom gland.

The protein localises to the secreted. The sequence is that of U-scoloptoxin-Er5e from Ethmostigmus rubripes (Giant centipede).